Consider the following 392-residue polypeptide: Alpha-(1,3)-fucosyltransferase fut-6 (392 aa).

The Cytoplasmic segment spans residues 1 to 12 (MSQIGGATCTWR). The helical; Signal-anchor for type II membrane protein transmembrane segment at 13–35 (YLGRFVTLGIYASVALFVWYTLV) threads the bilayer. Residues 36 to 392 (PTRSKHKDSI…CNNQIASKYL (357 aa)) lie on the Lumenal side of the membrane. N-linked (GlcNAc...) asparagine glycosylation occurs at asparagine 158.

The protein belongs to the glycosyltransferase 10 family. The cofactor is Unlike other alpha-(1,3)-fucosyltransferases, appears not to require a divalent metal cation as cofactor..

The protein resides in the golgi apparatus. Its subcellular location is the golgi stack membrane. Its pathway is protein modification; protein glycosylation. With respect to regulation, inhibited by divalent metal cations. Functionally, involved in the fucosylation of N-glycans. Preferentially catalyzes the addition of fucose in alpha 1-3 linkage to the distal GlcNAc residue in N-glycans. Catalyzes the transfer of fucose to Gal-beta-1-4-GlcNAc-alpha-pNP (LN-pNP) and Gal-beta-1-4-GlcNAc-beta-1-3-Gal-beta-1-4-Glc (LNnT). Unlike alpha-(1,3)-fucosyltransferase fut-1, does not transfer fucose to Man-alpha-1-3-(Man-alpha-1-6)-Man-beta-1-4-GlcNAc-beta-1-4-GlcNAc-beta-1-Asn (M3), Man-alpha-1-3-(Man-alpha-1-6)-Man-beta-1-4-GlcNAc-beta-1-4-(Fuc-alpha-1-6)-GlcNAc-beta-1-Asn (M3F6) and GlcNAc-beta-1-2-Man-alpha-1-3-(GlcNAc-beta-1-2-Man-alpha-1-6)-Man-beta-1-4-GlcNAc-beta-1-4(Fuc-alpha-1-6)-GlcNAc-beta-1-Asn (GnM3F6). The sequence is that of Alpha-(1,3)-fucosyltransferase fut-6 from Caenorhabditis elegans.